A 115-amino-acid chain; its full sequence is T cell receptor beta variable 7-4 (115 aa).

The signal sequence occupies residues M1–A21. In terms of domain architecture, Ig-like spans G22–L115. C42 and C111 are oxidised to a cystine. Positions Y67–K97 are disordered.

In terms of assembly, alpha-beta TR is a heterodimer composed of an alpha and beta chain; disulfide-linked. The alpha-beta TR is associated with the transmembrane signaling CD3 coreceptor proteins to form the TR-CD3 (TcR or TCR). The assembly of alpha-beta TR heterodimers with CD3 occurs in the endoplasmic reticulum where a single alpha-beta TR heterodimer associates with one CD3D-CD3E heterodimer, one CD3G-CD3E heterodimer and one CD247 homodimer forming a stable octameric structure. CD3D-CD3E and CD3G-CD3E heterodimers preferentially associate with TR alpha and TR beta chains, respectively. The association of the CD247 homodimer is the last step of TcR assembly in the endoplasmic reticulum and is required for transport to the cell surface.

The protein resides in the cell membrane. Its function is as follows. V region of the variable domain of T cell receptor (TR) beta chain that participates in the antigen recognition. Alpha-beta T cell receptors are antigen specific receptors which are essential to the immune response and are present on the cell surface of T lymphocytes. Recognize peptide-major histocompatibility (MH) (pMH) complexes that are displayed by antigen presenting cells (APC), a prerequisite for efficient T cell adaptive immunity against pathogens. Binding of alpha-beta TR to pMH complex initiates TR-CD3 clustering on the cell surface and intracellular activation of LCK that phosphorylates the ITAM motifs of CD3G, CD3D, CD3E and CD247 enabling the recruitment of ZAP70. In turn ZAP70 phosphorylates LAT, which recruits numerous signaling molecules to form the LAT signalosome. The LAT signalosome propagates signal branching to three major signaling pathways, the calcium, the mitogen-activated protein kinase (MAPK) kinase and the nuclear factor NF-kappa-B (NF-kB) pathways, leading to the mobilization of transcription factors that are critical for gene expression and essential for T cell growth and differentiation. The T cell repertoire is generated in the thymus, by V-(D)-J rearrangement. This repertoire is then shaped by intrathymic selection events to generate a peripheral T cell pool of self-MH restricted, non-autoaggressive T cells. Post-thymic interaction of alpha-beta TR with the pMH complexes shapes TR structural and functional avidity. The protein is T cell receptor beta variable 7-4 of Homo sapiens (Human).